A 47-amino-acid chain; its full sequence is U18-ctenitoxin-Pn1a (47 aa).

5 disulfides stabilise this stretch: Cys2/Cys16, Cys9/Cys22, Cys13/Cys46, Cys15/Cys34, and Cys24/Cys32.

Expressed by the venom gland.

The protein resides in the secreted. In terms of biological role, neurotoxin. Causes spastic paralysis and death in mice by intracerebroventricular injection at dose levels of 3 ug per mouse. The sequence is that of U18-ctenitoxin-Pn1a from Phoneutria nigriventer (Brazilian armed spider).